The chain runs to 215 residues: Small ribosomal subunit protein uS3 (215 aa).

One can recognise a KH type-2 domain in the interval 38–106 (LRAFLKKKLF…EVLIDIQEIR (69 aa)).

The protein belongs to the universal ribosomal protein uS3 family. Part of the 30S ribosomal subunit. Forms a tight complex with proteins S10 and S14.

Binds the lower part of the 30S subunit head. Binds mRNA in the 70S ribosome, positioning it for translation. This chain is Small ribosomal subunit protein uS3, found in Desulforapulum autotrophicum (strain ATCC 43914 / DSM 3382 / VKM B-1955 / HRM2) (Desulfobacterium autotrophicum).